A 122-amino-acid chain; its full sequence is Basic phospholipase A2 (122 aa).

Cystine bridges form between Cys26/Cys115, Cys28/Cys44, Cys43/Cys95, Cys49/Cys122, Cys50/Cys88, Cys57/Cys81, and Cys75/Cys86. Residues Tyr27, Gly29, and Gly31 each coordinate Ca(2+). His47 is an active-site residue. A Ca(2+)-binding site is contributed by Asp48. Asp89 is a catalytic residue.

The protein belongs to the phospholipase A2 family. Group II subfamily. D49 sub-subfamily. In terms of assembly, homodimer. Requires Ca(2+) as cofactor. In terms of tissue distribution, expressed by the venom gland.

Its subcellular location is the secreted. It catalyses the reaction a 1,2-diacyl-sn-glycero-3-phosphocholine + H2O = a 1-acyl-sn-glycero-3-phosphocholine + a fatty acid + H(+). In terms of biological role, snake venom phospholipase A2 (PLA2) that inhibits neuromuscular transmission by blocking acetylcholine release from the nerve termini. PLA2 catalyzes the calcium-dependent hydrolysis of the 2-acyl groups in 3-sn-phosphoglycerides. This is Basic phospholipase A2 from Gloydius blomhoffii (Mamushi).